We begin with the raw amino-acid sequence, 389 residues long: Type II methyltransferase M1.ScrFI (389 aa).

Positions 16–71 (IKEKRLRLNMTQKELADAVGMSKNGDRTIRRWENGETCPSQLEISAILRFPEIAPF) constitute an HTH cro/C1-type domain. The 309-residue stretch at 79 to 387 (YKMIDLFAGI…EKMLEVLEKS (309 aa)) folds into the SAM-dependent MTase C5-type domain. Residue cysteine 149 is part of the active site.

It belongs to the class I-like SAM-binding methyltransferase superfamily. C5-methyltransferase family.

It carries out the reaction a 2'-deoxycytidine in DNA + S-adenosyl-L-methionine = a 5-methyl-2'-deoxycytidine in DNA + S-adenosyl-L-homocysteine + H(+). A methylase, recognizes the double-stranded sequence 5'-CCNGG-3', methylates C-2 on both strands, and protects the DNA from cleavage by the ScrFI endonuclease. The polypeptide is Type II methyltransferase M1.ScrFI (scrFIAM) (Lactococcus lactis subsp. cremoris (Streptococcus cremoris)).